Reading from the N-terminus, the 136-residue chain is Large ribosomal subunit protein bL17 (136 aa).

This sequence belongs to the bacterial ribosomal protein bL17 family. In terms of assembly, part of the 50S ribosomal subunit. Contacts protein L32.

This is Large ribosomal subunit protein bL17 from Methylobacterium radiotolerans (strain ATCC 27329 / DSM 1819 / JCM 2831 / NBRC 15690 / NCIMB 10815 / 0-1).